The primary structure comprises 429 residues: Protein FAM98B (429 aa).

The tract at residues R304 to Y429 is disordered. Residues V305 to E314 are compositionally biased toward basic and acidic residues. The segment covering G332–Y429 has biased composition (gly residues).

It belongs to the FAM98 family. In terms of assembly, homodimer. Component of a tRNA-splicing ligase complex. Interacts with FAM98A.

Its subcellular location is the nucleus. It localises to the cytoplasm. In terms of biological role, positively stimulates PRMT1-induced protein arginine dimethylated arginine methylation. The chain is Protein FAM98B (Fam98b) from Mus musculus (Mouse).